A 421-amino-acid polypeptide reads, in one-letter code: Putative hydro-lyase KRH_21160 (421 aa).

Disordered stretches follow at residues 200–298 and 312–421; these read TWGH…SPVT and TRAG…AVSR. Positions 224–237 are enriched in basic residues; it reads GSRRRPRWWSRLRR. 2 stretches are compositionally biased toward low complexity: residues 243–260 and 370–380; these read PRAT…TRCP and SRGPGPCPRAA.

The protein belongs to the D-glutamate cyclase family.

The chain is Putative hydro-lyase KRH_21160 from Kocuria rhizophila (strain ATCC 9341 / DSM 348 / NBRC 103217 / DC2201).